A 99-amino-acid polypeptide reads, in one-letter code: Leydig cell tumor 10 kDa protein homolog (99 aa).

The interval 1–37 (MAQGQRKFQARKPAKSKTAATASEKNRGPRKGGRVIA) is disordered. A compositionally biased stretch (basic residues) spans 28–37 (GPRKGGRVIA).

This sequence belongs to the UPF0390 family.

Functionally, may have a potential role in hypercalcemia of malignancy. This is Leydig cell tumor 10 kDa protein homolog from Pongo abelii (Sumatran orangutan).